A 370-amino-acid chain; its full sequence is Lipoyl synthase, mitochondrial (370 aa).

Positions 104, 109, 115, 135, 139, 142, and 350 each coordinate [4Fe-4S] cluster. One can recognise a Radical SAM core domain in the interval 118 to 339 (GGDKSKATAT…KQKALELGFL (222 aa)).

This sequence belongs to the radical SAM superfamily. Lipoyl synthase family. Requires [4Fe-4S] cluster as cofactor.

The protein resides in the mitochondrion. It carries out the reaction [[Fe-S] cluster scaffold protein carrying a second [4Fe-4S](2+) cluster] + N(6)-octanoyl-L-lysyl-[protein] + 2 oxidized [2Fe-2S]-[ferredoxin] + 2 S-adenosyl-L-methionine + 4 H(+) = [[Fe-S] cluster scaffold protein] + N(6)-[(R)-dihydrolipoyl]-L-lysyl-[protein] + 4 Fe(3+) + 2 hydrogen sulfide + 2 5'-deoxyadenosine + 2 L-methionine + 2 reduced [2Fe-2S]-[ferredoxin]. Its pathway is protein modification; protein lipoylation via endogenous pathway; protein N(6)-(lipoyl)lysine from octanoyl-[acyl-carrier-protein]: step 2/2. Functionally, catalyzes the radical-mediated insertion of two sulfur atoms into the C-6 and C-8 positions of the octanoyl moiety bound to the lipoyl domains of lipoate-dependent enzymes, thereby converting the octanoylated domains into lipoylated derivatives. This is Lipoyl synthase, mitochondrial from Kluyveromyces lactis (strain ATCC 8585 / CBS 2359 / DSM 70799 / NBRC 1267 / NRRL Y-1140 / WM37) (Yeast).